Here is a 167-residue protein sequence, read N- to C-terminus: 2-C-methyl-D-erythritol 2,4-cyclodiphosphate synthase (167 aa).

Positions 9 and 11 each coordinate a divalent metal cation. Residues 9 to 11 (DVH) and 35 to 36 (HS) each bind 4-CDP-2-C-methyl-D-erythritol 2-phosphate. His-43 contributes to the a divalent metal cation binding site. 4-CDP-2-C-methyl-D-erythritol 2-phosphate contacts are provided by residues 57-59 (DIG), 62-66 (FPDTD), 133-136 (TTTE), Phe-140, and Arg-143.

This sequence belongs to the IspF family. Homotrimer. A divalent metal cation is required as a cofactor.

It catalyses the reaction 4-CDP-2-C-methyl-D-erythritol 2-phosphate = 2-C-methyl-D-erythritol 2,4-cyclic diphosphate + CMP. It participates in isoprenoid biosynthesis; isopentenyl diphosphate biosynthesis via DXP pathway; isopentenyl diphosphate from 1-deoxy-D-xylulose 5-phosphate: step 4/6. Functionally, involved in the biosynthesis of isopentenyl diphosphate (IPP) and dimethylallyl diphosphate (DMAPP), two major building blocks of isoprenoid compounds. Catalyzes the conversion of 4-diphosphocytidyl-2-C-methyl-D-erythritol 2-phosphate (CDP-ME2P) to 2-C-methyl-D-erythritol 2,4-cyclodiphosphate (ME-CPP) with a corresponding release of cytidine 5-monophosphate (CMP). This is 2-C-methyl-D-erythritol 2,4-cyclodiphosphate synthase from Glaesserella parasuis serovar 5 (strain SH0165) (Haemophilus parasuis).